Reading from the N-terminus, the 178-residue chain is MDHAEQGPDRPGVDDPGRGRRIGIDVGSVRIGVASSDPDGILATPVETVPRSKDRGPDAPDIRRIADIVEEYEAVEVIVGLPQTLRGERGKAASIATVFAKRLRRKVDPIPVRMADERLTTVTAARALRESGVSARGQRPVIDQAAAVAILQGWLDERSRSVNAGDVGGDVQLPEAGQ.

Basic and acidic residues-rich tracts occupy residues 1-18 (MDHA…DPGR) and 50-60 (PRSKDRGPDAP). Disordered stretches follow at residues 1-23 (MDHA…RRIG) and 36-60 (SDPD…PDAP).

The protein belongs to the YqgF nuclease family.

Its subcellular location is the cytoplasm. Functionally, could be a nuclease involved in processing of the 5'-end of pre-16S rRNA. The sequence is that of Putative pre-16S rRNA nuclease from Rhodococcus opacus (strain B4).